A 658-amino-acid polypeptide reads, in one-letter code: Protein CFAP20DC (658 aa).

2 disordered regions span residues 312–522 and 589–634; these read QQGE…EEEY and PVNQ…LDSS. Residues 319 to 328 show a composition bias toward polar residues; the sequence is SHPVKQTTPL. The span at 339 to 349 shows a compositional bias: basic and acidic residues; it reads PPRDPSADKGS. Composition is skewed to low complexity over residues 351–363 and 417–434; these read RRGL…SGSR and SSGP…LLLD. Over residues 494–506 the composition is skewed to basic and acidic residues; that stretch reads DPKEDSRVTKGDT. The segment covering 507–521 has biased composition (acidic residues); it reads ELEDDFYGSDSSEEE. Polar residues predominate over residues 625 to 634; it reads QPLEQSLDSS.

The sequence is that of Protein CFAP20DC from Rattus norvegicus (Rat).